We begin with the raw amino-acid sequence, 435 residues long: Maltodextrin transport system permease protein MalC (435 aa).

The next 10 helical transmembrane spans lie at 34 to 54 (GFIFLGVTIVFVLYFLALATP), 73 to 93 (FMLIRGAFHLIFVIVYVLFYF), 130 to 150 (YLLIIPSYVAMTFAIIFPVIV), 199 to 219 (IIWALAASTLQIVIGIFTAII), 230 to 250 (IFGVIFLLPWAVPAFITILTF), 263 to 283 (TQVLPILAKFLPFLDGALIPW), 294 to 314 (LIMMQGWLGFPYIYVLTLGIL), 338 to 358 (NITFPMILAVAAPTLISQYTF), 371 to 391 (GGGPGSVGGGAGSTDILISWI), and 404 to 424 (MAAAVTLIISIIVISISMIAF). The region spanning 195–423 (LSWTIIWALA…IIVISISMIA (229 aa)) is the ABC transmembrane type-1 domain.

It belongs to the binding-protein-dependent transport system permease family. MalFG subfamily.

It is found in the cell membrane. In terms of biological role, part of the binding-protein-dependent transport system for maltodextrin; probably responsible for the translocation of the substrate across the membrane. This is Maltodextrin transport system permease protein MalC (malC) from Streptococcus pneumoniae serotype 4 (strain ATCC BAA-334 / TIGR4).